The following is an 86-amino-acid chain: Small ribosomal subunit protein bS16 (86 aa).

Belongs to the bacterial ribosomal protein bS16 family.

This chain is Small ribosomal subunit protein bS16, found in Xylella fastidiosa (strain M23).